We begin with the raw amino-acid sequence, 100 residues long: Elevenin-Vc1 (100 aa).

The signal sequence occupies residues 1–24; the sequence is MAPSQKALLVLVLSMLLTASDSWA. Residues C29 and C38 are joined by a disulfide bond. A propeptide spanning residues 44-100 is cleaved from the precursor; the sequence is KRGGDSLSVGGSAELDDALTDPFLRSEEPREWRELTRLSRVLQTFLSHPTGETEQHD.

Belongs to the elevenin family. Monomer. Expressed by the venom duct.

Its subcellular location is the secreted. In terms of biological role, may mimic the function of prey elevenin neuropeptide. In vivo, intracranial injection in mice induces hyperactivity (tested at 5 and 10 nM). This is Elevenin-Vc1 from Conus victoriae (Queen Victoria cone).